We begin with the raw amino-acid sequence, 132 residues long: Fatty acid-binding protein (132 aa).

(5Z,8Z,11Z,14Z)-eicosatetraenoate contacts are provided by residues Arg107 and Arg127–Tyr129. (9Z)-octadecenoate contacts are provided by residues Arg107 and Arg127–Tyr129.

Belongs to the calycin superfamily. Fatty-acid binding protein (FABP) family.

The protein localises to the cytoplasm. Functionally, may play a role in the transport of fatty acids. Binds to various fatty acids but not retinoids. This Schistosoma japonicum (Blood fluke) protein is Fatty acid-binding protein.